The sequence spans 346 residues: Glycosyltransferase 1 domain-containing protein 1 (346 aa).

The N-terminal stretch at 1-16 is a signal peptide; sequence MRLLFLAVLRPHTGNA.

This sequence belongs to the glycosyltransferase group 1 family. Glycosyltransferase 4 subfamily.

It localises to the secreted. The protein is Glycosyltransferase 1 domain-containing protein 1 (GLT1D1) of Pongo abelii (Sumatran orangutan).